Reading from the N-terminus, the 496-residue chain is Probable cytosol aminopeptidase (496 aa).

Lys262 and Asp267 together coordinate Mn(2+). Residue Lys274 is part of the active site. Residues Asp285, Asp344, and Glu346 each coordinate Mn(2+). The active site involves Arg348.

This sequence belongs to the peptidase M17 family. Mn(2+) is required as a cofactor.

The protein resides in the cytoplasm. The catalysed reaction is Release of an N-terminal amino acid, Xaa-|-Yaa-, in which Xaa is preferably Leu, but may be other amino acids including Pro although not Arg or Lys, and Yaa may be Pro. Amino acid amides and methyl esters are also readily hydrolyzed, but rates on arylamides are exceedingly low.. It catalyses the reaction Release of an N-terminal amino acid, preferentially leucine, but not glutamic or aspartic acids.. In terms of biological role, presumably involved in the processing and regular turnover of intracellular proteins. Catalyzes the removal of unsubstituted N-terminal amino acids from various peptides. The protein is Probable cytosol aminopeptidase of Rhizobium etli (strain CIAT 652).